Reading from the N-terminus, the 344-residue chain is Aurora kinase B (344 aa).

The residue at position 35 (Thr-35) is a Phosphothreonine. At Ser-62 the chain carries Phosphoserine. Thr-64 carries the phosphothreonine modification. Residues 77 to 327 enclose the Protein kinase domain; it reads FEIGRPLGKG…LAQVSAHPWV (251 aa). Residues 83–91 and Lys-106 contribute to the ATP site; that span reads LGKGKFGNV. The Proton acceptor role is filled by Asp-200. Lys-215 carries the N6-acetyllysine modification. Ser-227 is modified (phosphoserine). A Phosphothreonine; by autocatalysis modification is found at Thr-232.

The protein belongs to the protein kinase superfamily. Ser/Thr protein kinase family. Aurora subfamily. In terms of assembly, component of the chromosomal passenger complex (CPC) composed of at least BIRC5/survivin, CDCA8/borealin, INCENP, AURKB or AURKC; predominantly independent AURKB- and AURKC-containing complexes exist. Associates with RACGAP1 during M phase. Interacts with SPDYC; this interaction may be required for proper localization of active, Thr-232-phosphorylated AURKB form during prometaphase and metaphase. Interacts with p53/TP53. Interacts (via the middle kinase domain) with NOC2L (via the N- and C-terminus domains). Interacts with CDCA1. Interacts with EVI5. Interacts with JTB. Interacts with NDC80. Interacts with PSMA3. Interacts with RNF2/RING1B. Interacts with SEPTIN1. Interacts with SIRT2. Interacts with TACC1. Interacts with TTC28. Post-translationally, the phosphorylation of Thr-232 requires the binding to INCENP and occurs by means of an autophosphorylation mechanism. Thr-232 phosphorylation is indispensable for the AURKB kinase activity. In terms of processing, acetylated at Lys-215 by KAT5 at kinetochores, increasing AURKB activity and promoting accurate chromosome segregation in mitosis. Ubiquitinated by different BCR (BTB-CUL3-RBX1) E3 ubiquitin ligase complexes. Ubiquitinated by the BCR(KLHL9-KLHL13) E3 ubiquitin ligase complex, ubiquitination leads to removal from mitotic chromosomes and is required for cytokinesis. During anaphase, the BCR(KLHL21) E3 ubiquitin ligase complex recruits the CPC complex from chromosomes to the spindle midzone and mediates the ubiquitination of AURKB. Ubiquitination of AURKB by BCR(KLHL21) E3 ubiquitin ligase complex may not lead to its degradation by the proteasome. Deubiquitinated by USP35; inhibiting CDH1-mediated degradation of AURKB.

It is found in the nucleus. The protein resides in the chromosome. Its subcellular location is the centromere. The protein localises to the kinetochore. It localises to the cytoplasm. It is found in the cytoskeleton. The protein resides in the spindle. Its subcellular location is the midbody. It carries out the reaction L-seryl-[protein] + ATP = O-phospho-L-seryl-[protein] + ADP + H(+). The enzyme catalyses L-threonyl-[protein] + ATP = O-phospho-L-threonyl-[protein] + ADP + H(+). Its activity is regulated as follows. Activity is greatly increased when AURKB is within the CPC complex. In particular, AURKB-phosphorylated INCENP acts as an activator of AURKB. Positive feedback between HASPIN and AURKB contributes to CPC localization. In terms of biological role, serine/threonine-protein kinase component of the chromosomal passenger complex (CPC), a complex that acts as a key regulator of mitosis. The CPC complex has essential functions at the centromere in ensuring correct chromosome alignment and segregation and is required for chromatin-induced microtubule stabilization and spindle assembly. Involved in the bipolar attachment of spindle microtubules to kinetochores and is a key regulator for the onset of cytokinesis during mitosis. Required for central/midzone spindle assembly and cleavage furrow formation. Key component of the cytokinesis checkpoint, a process required to delay abscission to prevent both premature resolution of intercellular chromosome bridges and accumulation of DNA damage: phosphorylates CHMP4C, leading to retain abscission-competent VPS4 (VPS4A and/or VPS4B) at the midbody ring until abscission checkpoint signaling is terminated at late cytokinesis. AURKB phosphorylates the CPC complex subunits BIRC5/survivin, CDCA8/borealin and INCENP. Phosphorylation of INCENP leads to increased AURKB activity. Other known AURKB substrates involved in centromeric functions and mitosis are CENPA, DES/desmin, GPAF, KIF2C, NSUN2, RACGAP1, SEPTIN1, VIM/vimentin, HASPIN, and histone H3. A positive feedback loop involving HASPIN and AURKB contributes to localization of CPC to centromeres. Phosphorylation of VIM controls vimentin filament segregation in cytokinetic process, whereas histone H3 is phosphorylated at 'Ser-10' and 'Ser-28' during mitosis (H3S10ph and H3S28ph, respectively). AURKB is also required for kinetochore localization of BUB1 and SGO1. Phosphorylation of p53/TP53 negatively regulates its transcriptional activity. Key regulator of active promoters in resting B- and T-lymphocytes: acts by mediating phosphorylation of H3S28ph at active promoters in resting B-cells, inhibiting RNF2/RING1B-mediated ubiquitination of histone H2A and enhancing binding and activity of the USP16 deubiquitinase at transcribed genes. Acts as an inhibitor of CGAS during mitosis: catalyzes phosphorylation of the N-terminus of CGAS during the G2-M transition, blocking CGAS liquid phase separation and activation, and thereby preventing CGAS-induced autoimmunity. Phosphorylates KRT5 during anaphase and telophase. Phosphorylates ATXN10 which promotes phosphorylation of ATXN10 by PLK1 and may play a role in the regulation of cytokinesis and stimulating the proteasomal degradation of ATXN10. The polypeptide is Aurora kinase B (AURKB) (Sus scrofa (Pig)).